We begin with the raw amino-acid sequence, 458 residues long: Phosphoglucosamine mutase (458 aa).

The Phosphoserine intermediate role is filled by serine 106. Mg(2+) contacts are provided by serine 106, aspartate 247, aspartate 249, and aspartate 251. Serine 106 bears the Phosphoserine mark.

This sequence belongs to the phosphohexose mutase family. Mg(2+) is required as a cofactor. In terms of processing, activated by phosphorylation.

It catalyses the reaction alpha-D-glucosamine 1-phosphate = D-glucosamine 6-phosphate. Catalyzes the conversion of glucosamine-6-phosphate to glucosamine-1-phosphate. The polypeptide is Phosphoglucosamine mutase (Chlamydia pneumoniae (Chlamydophila pneumoniae)).